The primary structure comprises 433 residues: Histidinol dehydrogenase 2 (433 aa).

3 residues coordinate NAD(+): Tyr130, Gln192, and Asn215. Residues Ser238, Gln260, and His263 each coordinate substrate. Residues Gln260 and His263 each contribute to the Zn(2+) site. Active-site proton acceptor residues include Glu328 and His329. 4 residues coordinate substrate: His329, Asp362, Glu416, and His421. Asp362 provides a ligand contact to Zn(2+). His421 lines the Zn(2+) pocket.

The protein belongs to the histidinol dehydrogenase family. The cofactor is Zn(2+).

The enzyme catalyses L-histidinol + 2 NAD(+) + H2O = L-histidine + 2 NADH + 3 H(+). It functions in the pathway amino-acid biosynthesis; L-histidine biosynthesis; L-histidine from 5-phospho-alpha-D-ribose 1-diphosphate: step 9/9. In terms of biological role, catalyzes the sequential NAD-dependent oxidations of L-histidinol to L-histidinaldehyde and then to L-histidine. The polypeptide is Histidinol dehydrogenase 2 (hisD2) (Nostoc sp. (strain PCC 7120 / SAG 25.82 / UTEX 2576)).